The following is a 79-amino-acid chain: Protein GOLVEN 2 (79 aa).

Positions 1–26 (MAIRVSHKSFLVALLLILFISSPTQA) are cleaved as a signal peptide. The propeptide occupies 27–65 (RSLREVVRNRTLLVVEKSQESRKIRHEGGGSDVDGLMDM). Residues 49-79 (KIRHEGGGSDVDGLMDMDYNSANKKRPIHNR) are disordered. Position 67 is a sulfotyrosine (Y67). P75 is subject to Hydroxyproline.

This sequence belongs to the RGF family. As to quaternary structure, binds to LRR receptor-like serine/threonine-protein kinases to trigger their dimerization with SERK proteins and subsequent signaling. As to expression, expressed in siliques, stems, hypocotyls, shoot apex, leaves, flowers and cotyledons, and, to a lower extent, in roots.

It localises to the secreted. The protein resides in the endoplasmic reticulum. Its function is as follows. Signaling peptide (root growth factor) that regulates the pattern of root growth and lateral root development by modulating the length and the number of cortical cells in the root apical meristem (RAM), and the anticlinal asymmetric cell divisions in lateral root initiation cells. Also involved in the regulation of hypocotyl bending and root gravitropism, probably by influencing the formation of auxin gradients. Maintains the postembryonic root stem cell niche. In Arabidopsis thaliana (Mouse-ear cress), this protein is Protein GOLVEN 2.